The primary structure comprises 320 residues: tRNA dimethylallyltransferase (320 aa).

10 to 17 serves as a coordination point for ATP; sequence GPTASGKT. 12-17 contacts substrate; it reads TASGKT. Interaction with substrate tRNA stretches follow at residues 35–38, 159–163, and 241–246; these read DSAL, QRIQR, and RCVGYR.

It belongs to the IPP transferase family. Monomer. Requires Mg(2+) as cofactor.

It carries out the reaction adenosine(37) in tRNA + dimethylallyl diphosphate = N(6)-dimethylallyladenosine(37) in tRNA + diphosphate. In terms of biological role, catalyzes the transfer of a dimethylallyl group onto the adenine at position 37 in tRNAs that read codons beginning with uridine, leading to the formation of N6-(dimethylallyl)adenosine (i(6)A). This Aromatoleum aromaticum (strain DSM 19018 / LMG 30748 / EbN1) (Azoarcus sp. (strain EbN1)) protein is tRNA dimethylallyltransferase.